The primary structure comprises 501 residues: Oxygen-independent coproporphyrinogen-III oxidase-like protein HemZ (501 aa).

A Radical SAM core domain is found at Asp-163 to Val-405. Tyr-174 contacts S-adenosyl-L-methionine. Residues Cys-180 and Cys-184 each contribute to the [4Fe-4S] cluster site. Residue Tyr-186 coordinates S-adenosyl-L-methionine. [4Fe-4S] cluster is bound at residue Cys-187. S-adenosyl-L-methionine is bound by residues Gly-233, Gly-234–Thr-235, Glu-267, Gln-295, Arg-307, and Asp-332.

It belongs to the anaerobic coproporphyrinogen-III oxidase family. HemZ subfamily. It depends on [4Fe-4S] cluster as a cofactor.

Its pathway is porphyrin-containing compound metabolism; protoporphyrin-IX biosynthesis. Involved in the biosynthesis of porphyrin-containing compound. In Bacillus subtilis (strain 168), this protein is Oxygen-independent coproporphyrinogen-III oxidase-like protein HemZ (hemZ).